The chain runs to 301 residues: Leucine-rich repeat-containing protein 30 (301 aa).

LRR repeat units lie at residues 72–93 (EVQK…VGKL), 95–116 (RIVV…VSLL), 118–139 (CLKV…LSLC), 141–163 (KLEV…ADLS), 164–185 (RLRK…VFSL), 187–208 (ELIF…IQHL), 210–231 (SLQI…LCLV), 233–254 (SLEL…LHLL), and 265–287 (MDKG…VEGG).

This chain is Leucine-rich repeat-containing protein 30 (LRRC30), found in Homo sapiens (Human).